The primary structure comprises 281 residues: Undecaprenyl-diphosphatase (281 aa).

The next 8 helical transmembrane spans lie at 4–24 (IEIL…WLPI), 45–65 (AFMS…VMVI), 89–109 (WLKV…DDWF), 113–133 (FHNM…FIYL), 152–172 (LPYT…LPGT), 190–210 (SVVT…ASAL), 225–245 (GQLF…MVAI), and 257–277 (FTLF…YSFV).

This sequence belongs to the UppP family.

The protein localises to the cell membrane. It catalyses the reaction di-trans,octa-cis-undecaprenyl diphosphate + H2O = di-trans,octa-cis-undecaprenyl phosphate + phosphate + H(+). Functionally, catalyzes the dephosphorylation of undecaprenyl diphosphate (UPP). Confers resistance to bacitracin. This is Undecaprenyl-diphosphatase from Streptococcus pneumoniae (strain Hungary19A-6).